The primary structure comprises 174 residues: MCLPFFTSINSSGLFKAVSWRIIESFLLELFFIFYSSFSWSSSLSSSEGTGAGTGTGTGTGTGTGTGTGTGTGTGTGTGTGTGTGTGTGTGTGTGTGTGTGTGTGTGTGTGTGTGTGTGTGTGTGTGTGTGTGTGTGTIWEGELVFFYAECKGYPKIKGVFWVVSFFYDTAKNV.

Positions 46–134 are disordered; that stretch reads SSEGTGAGTG…GTGTGTGTGT (89 aa). A run of 45 repeats spans residues 49–50, 51–52, 53–54, 55–56, 57–58, 59–60, 61–62, 63–64, 65–66, 67–68, 69–70, 71–72, 73–74, 75–76, 77–78, 79–80, 81–82, 83–84, 85–86, 87–88, 89–90, 91–92, 93–94, 95–96, 97–98, 99–100, 101–102, 103–104, 105–106, 107–108, 109–110, 111–112, 113–114, 115–116, 117–118, 119–120, 121–122, 123–124, 125–126, 127–128, 129–130, 131–132, 133–134, 135–136, and 137–138. Residues 49–138 are 45 X 2 AA tandem repeats of G-[TA]; that stretch reads GTGAGTGTGT…GTGTGTGTGT (90 aa). Gly residues predominate over residues 50–134; it reads TGAGTGTGTG…GTGTGTGTGT (85 aa).

It localises to the plastid. It is found in the chloroplast. The polypeptide is Period clock protein (Acetabularia acetabulum (Mermaid's wine glass)).